A 1199-amino-acid polypeptide reads, in one-letter code: Major DNA-binding protein (1199 aa).

Positions 289–314 (SGTTTARGARRNDVNSTSKPSPSGGF) are disordered. Residues 497–510 (CSLCEKHTRPVCAH) fold into a zinc finger. Short sequence motifs (required for filament formation) lie at residues 841–842 (FW) and 1146–1148 (FNF). The segment at 1172–1199 (LKRPPEDDELFDLSGIPIKHGNITMEMI) is required for nuclear localization.

It belongs to the herpesviridae major DNA-binding protein family. Homooligomers. Forms double-helical filaments necessary for the formation of replication compartments within the host nucleus. Interacts with the origin-binding protein. Interacts with the helicase primase complex; this interaction stimulates primer synthesis activity of the helicase-primase complex. Interacts with the DNA polymerase. Interacts with the alkaline exonuclease; this interaction increases its nuclease processivity.

Its subcellular location is the host nucleus. Plays several crucial roles in viral infection. Participates in the opening of the viral DNA origin to initiate replication by interacting with the origin-binding protein. May disrupt loops, hairpins and other secondary structures present on ssDNA to reduce and eliminate pausing of viral DNA polymerase at specific sites during elongation. Promotes viral DNA recombination by performing strand-transfer, characterized by the ability to transfer a DNA strand from a linear duplex to a complementary single-stranded DNA circle. Can also catalyze the renaturation of complementary single strands. Additionally, reorganizes the host cell nucleus, leading to the formation of prereplicative sites and replication compartments. This process is driven by the protein which can form double-helical filaments in the absence of DNA. This chain is Major DNA-binding protein, found in Varicella-zoster virus (strain Oka vaccine) (HHV-3).